Reading from the N-terminus, the 284-residue chain is Tropomyosin beta chain (284 aa).

At M1 the chain carries N-acetylmethionine. Residues 1–65 form a disordered region; that stretch reads MDAIKKKMQM…EVEKYSESVK (65 aa). The stretch at 1–284 forms a coiled coil; sequence MDAIKKKMQM…DNALNDITSL (284 aa). Composition is skewed to basic and acidic residues over residues 12–40 and 51–65; these read KLDK…KQLE and KGTE…ESVK. T53 is subject to Phosphothreonine. The residue at position 61 (S61) is a Phosphoserine; by PIK3CG. T79 is subject to Phosphothreonine. At S87 the chain carries Phosphoserine. T108 is subject to Phosphothreonine. Residues 117–136 are disordered; that stretch reads EKAADESERGMKVIENRAMK. 3 positions are modified to phosphoserine: S158, S206, and S215. Phosphothreonine is present on T252. Phosphotyrosine is present on Y261. Residue S271 is modified to Phosphoserine. T282 carries the post-translational modification Phosphothreonine. S283 is subject to Phosphoserine.

Belongs to the tropomyosin family. In terms of assembly, homodimer. Heterodimer of an alpha (TPM1, TPM3 or TPM4) and a beta (TPM2) chain. In terms of processing, phosphorylated on Ser-61 by PIK3CG. Phosphorylation on Ser-61 is required for ADRB2 internalization. As to expression, present in primary breast cancer tissue, absent from normal breast tissue.

The protein resides in the cytoplasm. It is found in the cytoskeleton. Binds to actin filaments in muscle and non-muscle cells. Plays a central role, in association with the troponin complex, in the calcium dependent regulation of vertebrate striated muscle contraction. Smooth muscle contraction is regulated by interaction with caldesmon. In non-muscle cells is implicated in stabilizing cytoskeleton actin filaments. The non-muscle isoform may have a role in agonist-mediated receptor internalization. The polypeptide is Tropomyosin beta chain (TPM2) (Homo sapiens (Human)).